Reading from the N-terminus, the 208-residue chain is Histone H1t (208 aa).

Residues 1-16 (MSETVPAASAGAVPAV) are compositionally biased toward low complexity. The disordered stretch occupies residues 1-40 (MSETVPAASAGAVPAVMEKPLTKKRGKKPAGLTSASRKAP). S9 bears the Phosphoserine mark. An H15 domain is found at 40 to 113 (PNLSVSKLIT…GASGSFKLSK (74 aa)). Citrulline is present on R58. The tract at residues 102–208 (GTGASGSFKL…ANIRKATSRK (107 aa)) is disordered. Basic residues predominate over residues 111 to 136 (LSKKVLPKSTRRKANKSASAKTKKLV). Position 143 is a phosphoserine (S143). Residues 148–157 (KTNKRAKKPR) show a composition bias toward basic residues. T159 carries the post-translational modification Phosphothreonine. Over residues 163-175 (KAVRSGRKAKGAK) the composition is skewed to basic residues. Phosphoserine occurs at positions 167 and 182. Residues 187–208 (RATKPKLTQHHKANIRKATSRK) are compositionally biased toward basic residues.

It belongs to the histone H1/H5 family. Phosphorylated in early spermatids. In terms of processing, citrullination at Arg-58 (H1R54ci) by PADI4 takes place within the DNA-binding site of H1 and results in its displacement from chromatin and global chromatin decondensation, thereby promoting pluripotency and stem cell maintenance.

Functionally, testis-specific histone H1 that forms less compacted chromatin compared to other H1 histone subtypes. Formation of more relaxed chromatin may be required to promote chromatin architecture required for proper chromosome regulation during meiosis, such as homologous recombination. Histones H1 act as linkers that bind to nucleosomes and compact polynucleosomes into a higher-order chromatin configuration. The sequence is that of Histone H1t from Macaca mulatta (Rhesus macaque).